We begin with the raw amino-acid sequence, 352 residues long: Putative [LysW]-L-2-aminoadipate/[LysW]-L-glutamate phosphate reductase (352 aa).

NADP(+) is bound by residues 10 to 13 (SGFT) and 34 to 36 (SRR). The active site involves Cys151. Residue Asn319 participates in NADP(+) binding.

The protein belongs to the NAGSA dehydrogenase family. Type 1 subfamily. LysY sub-subfamily.

The protein localises to the cytoplasm. The catalysed reaction is [amino-group carrier protein]-C-terminal-N-(1-carboxy-5-oxopentan-1-yl)-L-glutamine + phosphate + NADP(+) = [amino-group carrier protein]-C-terminal-N-(1-carboxy-5-phosphooxy-5-oxopentan-1-yl)-L-glutamine + NADPH + H(+). The enzyme catalyses [amino-group carrier protein]-C-terminal-gamma-(L-glutamyl-5-semialdehyde)-L-glutamate + phosphate + NADP(+) = [amino-group carrier protein]-C-terminal-gamma-(5-phospho-L-glutamyl)-L-glutamate + NADPH + H(+). It functions in the pathway amino-acid biosynthesis; L-lysine biosynthesis via AAA pathway; L-lysine from L-alpha-aminoadipate (Thermus route): step 3/5. The protein operates within amino-acid biosynthesis; L-arginine biosynthesis. Involved in both the arginine and lysine biosynthetic pathways. The sequence is that of Putative [LysW]-L-2-aminoadipate/[LysW]-L-glutamate phosphate reductase from Pyrobaculum islandicum (strain DSM 4184 / JCM 9189 / GEO3).